The primary structure comprises 447 residues: tRNA(Ile)-lysidine synthase (447 aa).

An ATP-binding site is contributed by 31-36 (SGGMDS).

The protein belongs to the tRNA(Ile)-lysidine synthase family.

It localises to the cytoplasm. The enzyme catalyses cytidine(34) in tRNA(Ile2) + L-lysine + ATP = lysidine(34) in tRNA(Ile2) + AMP + diphosphate + H(+). Its function is as follows. Ligates lysine onto the cytidine present at position 34 of the AUA codon-specific tRNA(Ile) that contains the anticodon CAU, in an ATP-dependent manner. Cytidine is converted to lysidine, thus changing the amino acid specificity of the tRNA from methionine to isoleucine. The protein is tRNA(Ile)-lysidine synthase of Pseudothermotoga lettingae (strain ATCC BAA-301 / DSM 14385 / NBRC 107922 / TMO) (Thermotoga lettingae).